The chain runs to 231 residues: L-ribulose-5-phosphate 4-epimerase SgbE (231 aa).

Substrate-binding positions include 27-28, 44-45, and 74-75; these read GN, SG, and SS. Zn(2+) is bound by residues D76, H95, and H97. D120 (proton donor/acceptor) is an active-site residue. Residue H171 coordinates Zn(2+). Y229 serves as the catalytic Proton donor/acceptor.

This sequence belongs to the aldolase class II family. AraD/FucA subfamily. The cofactor is Zn(2+).

It carries out the reaction L-ribulose 5-phosphate = D-xylulose 5-phosphate. Functionally, catalyzes the interconversion of L-ribulose 5-phosphate (LRu5P) and D-xylulose 5-phosphate (D-Xu5P) via a retroaldol/aldol mechanism (carbon-carbon bond cleavage analogous to a class II aldolase reaction). May be involved in the utilization of 2,3-diketo-L-gulonate. This Escherichia coli (strain K12) protein is L-ribulose-5-phosphate 4-epimerase SgbE.